Consider the following 475-residue polypeptide: Tetratricopeptide repeat protein 29 (475 aa).

TPR repeat units lie at residues 92–131 (DALREAARVRSLFWLQKPLEEQPDKLDYFYHYLTRAEDAE), 136–173 (FEDVYNNLYALACYFNNPEDKWVRNHFYERCFKIAQLI), 182–215 (AEAHMHMGLLYEEDGQLLEAAEHYEAFHQLTQGR), 234–267 (LRTYRLLSDKMLQNKEYKQAIKILIKASEIAKEG), 274–307 (GEASYYLGLAHLAAEEYETALTVLDTYCKISTEL), 314–347 (GRAYEAIAKVLQSQGNTTEAIKYLKKFVKIARNN), and 354–387 (VRASTMLGDIYNEKGHYNKASQRFQQAFDTTVEL). Positions 436–475 (DIEPDPVTEEFRGSTVETVSQNSEHLEELSRFPGDQKNET) are disordered. The segment covering 459-475 (EHLEELSRFPGDQKNET) has biased composition (basic and acidic residues).

It is found in the cytoplasm. It localises to the cytoskeleton. The protein localises to the flagellum axoneme. Its function is as follows. Axonemal protein which is implicated in axonemal and/or peri-axonemal structure assembly and regulates flagellum assembly and beating and therefore sperm motility. This is Tetratricopeptide repeat protein 29 (TTC29) from Macaca fascicularis (Crab-eating macaque).